The primary structure comprises 597 residues: MDELPNGNGAAPLKRGRGRRRRQPQPRGASVLALPLRPRKVRRHRKSAASRVAALRARALLSEDSDSNVESVRGKRERPAELPEASRSAEPRPVPVRPRPASATLPRRVEGRAALSRNLGKPAPLPGSHVDDPERPWDSPLQQVLAELNGIPSSRRRAARLFEWLLAPLPPDHFYRRLWEREAVLVRRQDHSYYEGLFSTSDLDWMLRYEDVHFGQHLDAARYIDGRRETLNPPGRALPAAAWSLYQAGCSLRLLCPQAFSPTVWQFLAVLQEQFGSMAGSNVYLTPPNSQGFAPHYDDIEAFVLQLEGRKLWRVYRPRDPSEELALTSSPNFSQEDLGEPVLQTVLEPGDLLYFPRGFIHQAECQDGVHSLHLTLSTYQRNTWGDFLEAVLPLAMQAAIEENVEFRRGLPRDFMDYMGAQHSDSKDPRRTAFMEKVRVLVARLGHFAPVDAVADQRAKDFIHDSLPPVLTDRERALSVHGLPIRWEAGEPVNVGAQLTTETQVHMLQDGIARLVGEGGRLFLYYTVENSRVYHLEEPKCLEIYPQQADAMELLLRSYPEFVRVGDLPCDSVEDQLSLATMLYDKGLLLTKTPLVLS.

The residue at position 1 (M1) is an N-acetylmethionine. The interval 1 to 138 (MDELPNGNGA…HVDDPERPWD (138 aa)) is disordered. 2 stretches are compositionally biased toward basic residues: residues 14-24 (KRGRGRRRRQP) and 37-48 (RPRKVRRHRKSA). Positions 49 to 62 (ASRVAALRARALLS) are enriched in low complexity. Phosphoserine occurs at positions 62 and 65. The span at 72–81 (VRGKRERPAE) shows a compositional bias: basic and acidic residues. Residue S86 is modified to Phosphoserine. Positions 250 to 395 (CSLRLLCPQA…DFLEAVLPLA (146 aa)) constitute a JmjC domain. The Fe cation site is built by H296, D298, and H361.

This sequence belongs to the ROX family. NO66 subfamily. As to quaternary structure, interacts with SP7/OSX; the interaction is direct. Interacts with MYC. Interacts with PHF19; leading to its recruitment to H3K36me3 sites. The cofactor is Fe(2+).

Its subcellular location is the nucleus. The protein localises to the nucleolus. The protein resides in the nucleoplasm. It catalyses the reaction N(6),N(6)-dimethyl-L-lysyl(36)-[histone H3] + 2 2-oxoglutarate + 2 O2 = L-lysyl(36)-[histone H3] + 2 formaldehyde + 2 succinate + 2 CO2. The catalysed reaction is N(6)-methyl-L-lysyl-[protein] + 2-oxoglutarate + O2 = L-lysyl-[protein] + formaldehyde + succinate + CO2. The enzyme catalyses L-histidyl-[protein] + 2-oxoglutarate + O2 = (3S)-3-hydroxy-L-histidyl-[protein] + succinate + CO2. Functionally, oxygenase that can act as both a histone lysine demethylase and a ribosomal histidine hydroxylase. Specifically demethylates 'Lys-4' (H3K4me) and 'Lys-36' (H3K36me) of histone H3, thereby playing a central role in histone code. Preferentially demethylates trimethylated H3 'Lys-4' (H3K4me3) and monomethylated H3 'Lys-4' (H3K4me1) residues, while it has weaker activity for dimethylated H3 'Lys-36' (H3K36me2). Acts as a regulator of osteoblast differentiation via its interaction with SP7/OSX by demethylating H3K4me and H3K36me, thereby inhibiting SP7/OSX-mediated promoter activation. Also catalyzes demethylation of non-histone proteins, such as CGAS: demethylation of monomethylated CGAS promotes interaction between CGAS and PARP1, followed by PARP1 inactivation. Also catalyzes the hydroxylation of 60S ribosomal protein L8 on 'His-216', thereby playing a role in ribosome biogenesis. Participates in MYC-induced transcriptional activation. This is Ribosomal oxygenase 1 from Rattus norvegicus (Rat).